The sequence spans 260 residues: Scytalidopepsin B (260 aa).

Positions 1-20 are cleaved as a signal peptide; the sequence is MKFTTAAVLSALVSAEIAFA. A propeptide spanning residues 21 to 54 is cleaved from the precursor; that stretch reads APGGNGFARRQARRQARAAGLKASPFRQVNAKEA. An intrachain disulfide couples Cys-101 to Cys-181. The active-site Proton acceptor is Glu-190. Intrachain disulfides connect Cys-195–Cys-219 and Cys-248–Cys-257.

The protein belongs to the peptidase G1 family. As to quaternary structure, monomer.

It catalyses the reaction Hydrolysis of proteins with broad specificity, cleaving 24-Phe-|-Phe-25, but not 15-Leu-|-Tyr-16 and 25-Phe-|-Tyr-26 in the B chain of insulin.. The protein is Scytalidopepsin B of Scytalidium lignicola (Hyphomycete).